Consider the following 569-residue polypeptide: Potassium-transporting ATPase potassium-binding subunit (569 aa).

The next 10 membrane-spanning stretches (helical) occupy residues 5–25 (GWAE…PLGV), 65–85 (GYAG…YAVL), 135–155 (LVLT…AAAL), 179–199 (LYVL…LGLP), 254–274 (LTNL…FFAF), 286–306 (ALVI…YWTE), 383–403 (GIAV…LMVG), 422–442 (LLTV…AAVL), 489–509 (MGVA…AMAG), and 528–548 (GGLF…LQFF).

The protein belongs to the KdpA family. As to quaternary structure, the system is composed of three essential subunits: KdpA, KdpB and KdpC.

It is found in the cell inner membrane. Its function is as follows. Part of the high-affinity ATP-driven potassium transport (or Kdp) system, which catalyzes the hydrolysis of ATP coupled with the electrogenic transport of potassium into the cytoplasm. This subunit binds the periplasmic potassium ions and delivers the ions to the membrane domain of KdpB through an intramembrane tunnel. This chain is Potassium-transporting ATPase potassium-binding subunit, found in Caulobacter sp. (strain K31).